A 378-amino-acid chain; its full sequence is SPbeta prophage-derived uncharacterized protein YorJ (378 aa).

This Bacillus subtilis (strain 168) protein is SPbeta prophage-derived uncharacterized protein YorJ (yorJ).